The primary structure comprises 396 residues: L-lactate dehydrogenase (396 aa).

Residues 1–380 (MIISAASDYR…SGDSLVQELG (380 aa)) enclose the FMN hydroxy acid dehydrogenase domain. Residue Tyr24 coordinates substrate. FMN contacts are provided by Ser106 and Gln127. Tyr129 lines the substrate pocket. Thr155 contacts FMN. Residue Arg164 participates in substrate binding. Position 251 (Lys251) interacts with FMN. Residue His275 is the Proton acceptor of the active site. Substrate is bound at residue Arg278. An FMN-binding site is contributed by 306–330 (DSGIRNGLDVVRMIALGADTVLLGR).

It belongs to the FMN-dependent alpha-hydroxy acid dehydrogenase family. FMN serves as cofactor.

Its subcellular location is the cell inner membrane. It catalyses the reaction (S)-lactate + A = pyruvate + AH2. In terms of biological role, catalyzes the conversion of L-lactate to pyruvate. Is coupled to the respiratory chain. This is L-lactate dehydrogenase from Salmonella paratyphi C (strain RKS4594).